Consider the following 108-residue polypeptide: MIITTTDVIQGAVIESYLGIVTAEVVYGSNFLRDFLAGIRDIIGGRTASYERLFEQGQRKALEELEQRAQRLGANAVIGIEIDTGTINLDQSGVLLLITATGTAVKMR.

The protein belongs to the UPF0145 family.

This Nostoc punctiforme (strain ATCC 29133 / PCC 73102) protein is UPF0145 protein Npun_F4817.